The sequence spans 270 residues: Ribosomal RNA small subunit methyltransferase A (270 aa).

Residues His-11, Leu-13, Gly-38, Glu-59, Asp-84, and Asn-109 each coordinate S-adenosyl-L-methionine.

This sequence belongs to the class I-like SAM-binding methyltransferase superfamily. rRNA adenine N(6)-methyltransferase family. RsmA subfamily.

It localises to the cytoplasm. It carries out the reaction adenosine(1518)/adenosine(1519) in 16S rRNA + 4 S-adenosyl-L-methionine = N(6)-dimethyladenosine(1518)/N(6)-dimethyladenosine(1519) in 16S rRNA + 4 S-adenosyl-L-homocysteine + 4 H(+). Specifically dimethylates two adjacent adenosines (A1518 and A1519) in the loop of a conserved hairpin near the 3'-end of 16S rRNA in the 30S particle. May play a critical role in biogenesis of 30S subunits. The sequence is that of Ribosomal RNA small subunit methyltransferase A from Crocosphaera subtropica (strain ATCC 51142 / BH68) (Cyanothece sp. (strain ATCC 51142)).